We begin with the raw amino-acid sequence, 293 residues long: uncharacterized protein (293 aa).

This is an uncharacterized protein from Mycobacterium tuberculosis (strain CDC 1551 / Oshkosh).